Reading from the N-terminus, the 357-residue chain is Phosphoribosylformylglycinamidine cyclo-ligase (357 aa).

Belongs to the AIR synthase family.

It is found in the cytoplasm. The enzyme catalyses 2-formamido-N(1)-(5-O-phospho-beta-D-ribosyl)acetamidine + ATP = 5-amino-1-(5-phospho-beta-D-ribosyl)imidazole + ADP + phosphate + H(+). It functions in the pathway purine metabolism; IMP biosynthesis via de novo pathway; 5-amino-1-(5-phospho-D-ribosyl)imidazole from N(2)-formyl-N(1)-(5-phospho-D-ribosyl)glycinamide: step 2/2. The sequence is that of Phosphoribosylformylglycinamidine cyclo-ligase from Rhodopseudomonas palustris (strain ATCC BAA-98 / CGA009).